The sequence spans 357 residues: Membrane-bound lytic murein transglycosylase C (357 aa).

Residues 1-16 form the signal peptide; sequence MKKLLALFVIAPILIS. A lipid anchor (N-palmitoyl cysteine) is attached at cysteine 17. Cysteine 17 carries S-diacylglycerol cysteine lipidation.

This sequence belongs to the transglycosylase Slt family.

The protein localises to the cell outer membrane. It carries out the reaction Exolytic cleavage of the (1-&gt;4)-beta-glycosidic linkage between N-acetylmuramic acid (MurNAc) and N-acetylglucosamine (GlcNAc) residues in peptidoglycan, from either the reducing or the non-reducing ends of the peptidoglycan chains, with concomitant formation of a 1,6-anhydrobond in the MurNAc residue.. In terms of biological role, murein-degrading enzyme. May play a role in recycling of muropeptides during cell elongation and/or cell division. The polypeptide is Membrane-bound lytic murein transglycosylase C (Photorhabdus laumondii subsp. laumondii (strain DSM 15139 / CIP 105565 / TT01) (Photorhabdus luminescens subsp. laumondii)).